The following is a 491-amino-acid chain: Nuatigenin 3-beta-glucosyltransferase (491 aa).

The Proton acceptor role is filled by histidine 20. An anthocyanidin is bound at residue histidine 20. The active-site Charge relay is the aspartate 125. Alanine 352, glutamine 354, histidine 369, tryptophan 372, asparagine 373, serine 374, and glutamate 377 together coordinate UDP-alpha-D-glucose. Alanine 392 is a binding site for an anthocyanidin. Positions 393 and 394 each coordinate UDP-alpha-D-glucose.

This sequence belongs to the UDP-glycosyltransferase family. As to expression, expressed in roots, stems and leaves.

It carries out the reaction nuatigenin + UDP-alpha-D-glucose = nuatigenin 3-beta-D-glucopyranoside + UDP + H(+). The catalysed reaction is diosgenin + UDP-alpha-D-glucose = diosgenin 3-O-beta-D-glucoside + UDP + H(+). It catalyses the reaction tigogenin + UDP-alpha-D-glucose = tigogenin 3-O-beta-D-glucopyranoside + UDP + H(+). The enzyme catalyses solasodine + UDP-alpha-D-glucose = solasodine 3-beta-D-glucoside + UDP + H(+). It carries out the reaction solanidine + UDP-alpha-D-glucose = solanidine 3-O-beta-D-glucopyranoside + UDP + H(+). The catalysed reaction is tomatidine + UDP-alpha-D-glucose = tomatidine 3-O-beta-D-glucopyranoside + UDP + H(+). Glucosyltransferase involved in steroid saponin biosynthesis. Catalyzes the 3-O-glucosylation of steroidal sapogenins, such as diosgenin, nuatigenin and tigogenin. Can glucosylate steroidal alkaloids, such as solanidine, solasodine and tomatidine. The protein is Nuatigenin 3-beta-glucosyltransferase of Solanum aculeatissimum (Dutch eggplant).